Consider the following 197-residue polypeptide: Dephospho-CoA kinase (197 aa).

One can recognise a DPCK domain in the interval 2 to 197 (IVGLTGGIAS…YQQILSLNAA (196 aa)). An ATP-binding site is contributed by 10–15 (ASGKTL).

This sequence belongs to the CoaE family.

The protein resides in the cytoplasm. It carries out the reaction 3'-dephospho-CoA + ATP = ADP + CoA + H(+). The protein operates within cofactor biosynthesis; coenzyme A biosynthesis; CoA from (R)-pantothenate: step 5/5. Catalyzes the phosphorylation of the 3'-hydroxyl group of dephosphocoenzyme A to form coenzyme A. In Dichelobacter nodosus (Bacteroides nodosus), this protein is Dephospho-CoA kinase.